Here is a 301-residue protein sequence, read N- to C-terminus: Bifunctional protein FolD (301 aa).

NADP(+)-binding positions include 164 to 166, Ser-191, and Ile-232; that span reads GRS.

This sequence belongs to the tetrahydrofolate dehydrogenase/cyclohydrolase family. As to quaternary structure, homodimer.

The enzyme catalyses (6R)-5,10-methylene-5,6,7,8-tetrahydrofolate + NADP(+) = (6R)-5,10-methenyltetrahydrofolate + NADPH. The catalysed reaction is (6R)-5,10-methenyltetrahydrofolate + H2O = (6R)-10-formyltetrahydrofolate + H(+). It participates in one-carbon metabolism; tetrahydrofolate interconversion. Functionally, catalyzes the oxidation of 5,10-methylenetetrahydrofolate to 5,10-methenyltetrahydrofolate and then the hydrolysis of 5,10-methenyltetrahydrofolate to 10-formyltetrahydrofolate. This Borreliella afzelii (strain PKo) (Borrelia afzelii) protein is Bifunctional protein FolD.